The primary structure comprises 527 residues: SusD-like protein P25 (527 aa).

Positions 1–15 (MKIQNIIVYVFLIFS) are cleaved as a signal peptide. Cys-16 is lipidated: N-palmitoyl cysteine. The S-diacylglycerol cysteine moiety is linked to residue Cys-16.

Belongs to the SusD family.

It is found in the cell outer membrane. Its function is as follows. Polysaccharide-binding protein probably involved in ulvan degradation. Ulvan is the main polysaccharide component of the Ulvales (green seaweed) cell wall. It is composed of disaccharide building blocks comprising 3-sulfated rhamnose (Rha3S) linked to D-glucuronic acid (GlcA), L-iduronic acid (IduA), or D-xylose (Xyl). The SusD-like protein may mediate ulvan oligomer-binding before transport in the periplasm for further degradation. The chain is SusD-like protein P25 from Formosa agariphila (strain DSM 15362 / KCTC 12365 / LMG 23005 / KMM 3901 / M-2Alg 35-1).